The sequence spans 408 residues: Succinylornithine transaminase (408 aa).

At K252 the chain carries N6-(pyridoxal phosphate)lysine.

Belongs to the class-III pyridoxal-phosphate-dependent aminotransferase family. AstC subfamily. The cofactor is pyridoxal 5'-phosphate.

It catalyses the reaction N(2)-succinyl-L-ornithine + 2-oxoglutarate = N-succinyl-L-glutamate 5-semialdehyde + L-glutamate. It participates in amino-acid degradation; L-arginine degradation via AST pathway; L-glutamate and succinate from L-arginine: step 3/5. In terms of biological role, catalyzes the transamination of N(2)-succinylornithine and alpha-ketoglutarate into N(2)-succinylglutamate semialdehyde and glutamate. Can also act as an acetylornithine aminotransferase. This chain is Succinylornithine transaminase, found in Salmonella dublin (strain CT_02021853).